An 86-amino-acid polypeptide reads, in one-letter code: Large ribosomal subunit protein uL30m (86 aa).

The tract at residues 67 to 86 (QQRELRKSNPGFIVEKRTID) is disordered.

It belongs to the universal ribosomal protein uL30 family. In terms of assembly, component of the mitochondrial large ribosomal subunit (mt-LSU). Mature yeast 74S mitochondrial ribosomes consist of a small (37S) and a large (54S) subunit. The 37S small subunit contains a 15S ribosomal RNA (15S mt-rRNA) and 34 different proteins. The 54S large subunit contains a 21S rRNA (21S mt-rRNA) and 46 different proteins.

It is found in the mitochondrion. In terms of biological role, component of the mitochondrial ribosome (mitoribosome), a dedicated translation machinery responsible for the synthesis of mitochondrial genome-encoded proteins, including at least some of the essential transmembrane subunits of the mitochondrial respiratory chain. The mitoribosomes are attached to the mitochondrial inner membrane and translation products are cotranslationally integrated into the membrane. This is Large ribosomal subunit protein uL30m (MRPL33) from Saccharomyces cerevisiae (strain ATCC 204508 / S288c) (Baker's yeast).